The following is a 1512-amino-acid chain: DNA (cytosine-5)-methyltransferase 2 (1512 aa).

Residues 1–22 are compositionally biased toward basic and acidic residues; sequence METKVGKQKKRSVDSNDDVSKE. 2 disordered regions span residues 1 to 35 and 634 to 678; these read METK…RNFK and AIHE…GNSE. Acidic residues predominate over residues 638–662; the sequence is VEEEEIEEDEEEDENEEDDIEEEAV. BAH domains lie at 707–841 and 909–1026; these read ETVA…FSLP and TTLK…KQFP. The region spanning 1071–1505 is the SAM-dependent MTase C5-type domain; it reads LATLDIFAGC…RKLKEALYLK (435 aa). Cys-1176 is an active-site residue.

It belongs to the class I-like SAM-binding methyltransferase superfamily. C5-methyltransferase family. In terms of tissue distribution, expressed at low levels in vegetative and floral organs.

The protein resides in the nucleus. The catalysed reaction is a 2'-deoxycytidine in DNA + S-adenosyl-L-methionine = a 5-methyl-2'-deoxycytidine in DNA + S-adenosyl-L-homocysteine + H(+). Maintains chromatin CpG methylation that plays a role in genomic imprinting, regulation of embryogenesis and seed viability. Required for proper patterns of CG DNA methylation in dividing cells. The chain is DNA (cytosine-5)-methyltransferase 2 (MET2) from Arabidopsis thaliana (Mouse-ear cress).